Consider the following 452-residue polypeptide: MVQLLAGRWRPTGARRGTRGGLPELSSAAKHEDSLFRDLFEDYERWVRPVEHLSDKIKIKFGLAISQLVDVDEKNQLMTTNVWLKQEWIDVKLRWNPDDYGGIKIIRVPSDSLWIPDIVLFDNADGRFEGASTKTVVRYNGTVTWTQPANYKSSCTIDVTFFPFDLQNCSMKFGSWTYDGSQVDIILEDQDVDRTDFFDNGEWEIMSAMGSKGNRTDSCCWYPYITYSFVIKRLPLFYTLFLIIPCIGLSFLTVVVFYLPSNEGEKISLCTSVLVSLTVFLLVIEEIIPSSSKVIPLIGEYLVFTMIFVTLSIMVTVFAINIHHRSSSTHNAMAPWVRKIFLHKLPKLLCMRSHADRYFTQREEAESGAGPKSRNTLEAALDCIRYITRHVVKENDVREVVEDWKFIAQVLDRMFLWTFLLVSIIGTLGLFVPVIYKWANIIVPVHIGNTIK.

An N-terminal signal peptide occupies residues 1 to 27 (MVQLLAGRWRPTGARRGTRGGLPELSS). Over 28-239 (AAKHEDSLFR…VIKRLPLFYT (212 aa)) the chain is Extracellular. 3 N-linked (GlcNAc...) asparagine glycosylation sites follow: asparagine 140, asparagine 168, and asparagine 214. A disulfide bond links cysteine 155 and cysteine 169. Residues cysteine 219 and cysteine 220 are joined by a disulfide bond. Transmembrane regions (helical) follow at residues 240-260 (LFLIIPCIGLSFLTVVVFYLP), 269-289 (LCTSVLVSLTVFLLVIEEIIP), and 302-322 (LVFTMIFVTLSIMVTVFAINI). Over 323–414 (HHRSSSTHNA…KFIAQVLDRM (92 aa)) the chain is Cytoplasmic. Residues 415–435 (FLWTFLLVSIIGTLGLFVPVI) traverse the membrane as a helical segment. The Extracellular portion of the chain corresponds to 436 to 452 (YKWANIIVPVHIGNTIK).

This sequence belongs to the ligand-gated ion channel (TC 1.A.9) family. Acetylcholine receptor (TC 1.A.9.1) subfamily. Alpha-5/CHRNA5 sub-subfamily. Neuronal AChR that forms heteropentamers composed of two different type of subunits: alpha and non-alpha (beta). CHRNA5/alpha-5 subunit is only able to form functional nAChRs when co-assembled with another alpha subunit, can be combined to CHRNA4/alpha-4 or CHRNA3/alpha-3 and CHRNB4/beta-4 or CHRNB2/beta-2 to give rise to functional receptors. Interacts with LYPD6.

The protein resides in the synaptic cell membrane. The protein localises to the cell membrane. It catalyses the reaction Ca(2+)(in) = Ca(2+)(out). The catalysed reaction is K(+)(in) = K(+)(out). The enzyme catalyses Na(+)(in) = Na(+)(out). Its activity is regulated as follows. Activated by a myriad of ligands such as acetylcholine, cytisine, nicotine, choline and epibatidine. Component of neuronal acetylcholine receptors (nAChRs) that function as pentameric, ligand-gated cation channels with high calcium permeability among other activities. nAChRs are excitatory neurotrasnmitter receptors formed by a collection of nAChR subunits known to mediate synaptic transmission in the nervous system and the neuromuscular junction. Each nAchR subunit confers differential attributes to channel properties, including activation, deactivation and desensitization kinetics, pH sensitivity, cation permeability, and binding to allosteric modulators. Has an accessory rather than functional role and is only able to form functional nAChRs when co-assembled with another beta subunit. Participates in pentameric assemblies along with CHRNA3, CHRNA4, CHRNB2 and CHRNB4. Increases receptor sensitivity to acetylcholine and nicotine when associated with CHRNA4 and CHRNB2. Plays a role in nicotine addiction. In Rattus norvegicus (Rat), this protein is Neuronal acetylcholine receptor subunit alpha-5 (Chrna5).